Consider the following 294-residue polypeptide: NAD kinase (294 aa).

Residue Asp-73 is the Proton acceptor of the active site. NAD(+) contacts are provided by residues 73 to 74, 147 to 148, His-158, Arg-175, Asp-177, 188 to 193, and Gln-249; these read DG, NE, and TAYSLS.

It belongs to the NAD kinase family. Requires a divalent metal cation as cofactor.

The protein resides in the cytoplasm. It catalyses the reaction NAD(+) + ATP = ADP + NADP(+) + H(+). Functionally, involved in the regulation of the intracellular balance of NAD and NADP, and is a key enzyme in the biosynthesis of NADP. Catalyzes specifically the phosphorylation on 2'-hydroxyl of the adenosine moiety of NAD to yield NADP. The chain is NAD kinase from Aeromonas salmonicida (strain A449).